The primary structure comprises 726 residues: Ribonuclease R (726 aa).

Positions Arg262–Leu590 constitute an RNB domain. One can recognise an S1 motif domain in the interval Gly642–Tyr723.

This sequence belongs to the RNR ribonuclease family. RNase R subfamily. As to quaternary structure, monomer.

The protein resides in the cytoplasm. The catalysed reaction is Exonucleolytic cleavage in the 3'- to 5'-direction to yield nucleoside 5'-phosphates.. In terms of biological role, 3'-5' exoribonuclease that releases 5'-nucleoside monophosphates and is involved in maturation of structured RNAs. This chain is Ribonuclease R, found in Buchnera aphidicola subsp. Schizaphis graminum (strain Sg).